Reading from the N-terminus, the 349-residue chain is Pinopsin (349 aa).

The segment covering methionine 1–proline 16 has biased composition (polar residues). Positions methionine 1–proline 22 are disordered. The Extracellular portion of the chain corresponds to methionine 1–methionine 32. A helical transmembrane segment spans residues tyrosine 33–valine 57. Residues serine 58–asparagine 69 lie on the Cytoplasmic side of the membrane. The helical transmembrane segment at tyrosine 70–asparagine 94 threads the bilayer. Topologically, residues isoleucine 95–glutamate 109 are extracellular. The cysteines at positions 106 and 183 are disulfide-linked. Residues glycine 110–leucine 129 traverse the membrane as a helical segment. The Cytoplasmic portion of the chain corresponds to glutamate 130 to histidine 148. The chain crosses the membrane as a helical span at residues alanine 149–serine 172. Residues serine 173 to serine 196 lie on the Extracellular side of the membrane. N-linked (GlcNAc...) asparagine glycosylation occurs at asparagine 194. Residues tyrosine 197 to leucine 224 traverse the membrane as a helical segment. The Cytoplasmic segment spans residues arginine 225–arginine 246. Residues methionine 247–alanine 270 traverse the membrane as a helical segment. The Extracellular portion of the chain corresponds to threonine 271 to glutamine 278. A helical membrane pass occupies residues proline 279–methionine 303. Residue lysine 290 is modified to N6-(retinylidene)lysine. Topologically, residues asparagine 304 to valine 349 are cytoplasmic. S-palmitoyl cysteine attachment occurs at residues cysteine 316 and cysteine 317. The segment at glycine 325–valine 349 is disordered.

Belongs to the G-protein coupled receptor 1 family. Opsin subfamily. Post-translationally, phosphorylated on some or all of the serine and threonine residues present in the C-terminal region. As to expression, pineal gland.

Its subcellular location is the membrane. Produces a slow and prolonged phototransduction response consistent with the non-visual function of pineal photoreception. This Columba livia (Rock dove) protein is Pinopsin.